The following is a 211-amino-acid chain: FMN-dependent NADH:quinone oxidoreductase 3 (211 aa).

FMN is bound at residue 102–105 (MWNF).

Belongs to the azoreductase type 1 family. As to quaternary structure, homodimer. Requires FMN as cofactor.

It catalyses the reaction 2 a quinone + NADH + H(+) = 2 a 1,4-benzosemiquinone + NAD(+). The enzyme catalyses N,N-dimethyl-1,4-phenylenediamine + anthranilate + 2 NAD(+) = 2-(4-dimethylaminophenyl)diazenylbenzoate + 2 NADH + 2 H(+). Quinone reductase that provides resistance to thiol-specific stress caused by electrophilic quinones. Functionally, also exhibits azoreductase activity. Catalyzes the reductive cleavage of the azo bond in aromatic azo compounds to the corresponding amines. This Bacillus cereus (strain ATCC 10987 / NRS 248) protein is FMN-dependent NADH:quinone oxidoreductase 3.